Consider the following 2172-residue polypeptide: Non-reducing polyketide synthase dpfgA (2172 aa).

The segment at 74–181 (EWIKCGNSSL…LALCVGALVD (108 aa)) is N-terminal acylcarrier protein transacylase domain (SAT). Positions 389-783 (DDSIAIIGVS…GTNAAMLVCQ (395 aa)) constitute a Ketosynthase family 3 (KS3) domain. Residues Cys529, His665, and His706 each act as for beta-ketoacyl synthase activity in the active site. Residues 895-1197 (VFAGQTGRQA…SFHSILLQGQ (303 aa)) form a malonyl-CoA:ACP transacylase (MAT) domain region. Residue Ser981 is the For acyl/malonyl transferase activity of the active site. The tract at residues 1270–1403 (PELVSLAGPT…GTINWQGQGC (134 aa)) is N-terminal hotdog fold. In terms of domain architecture, PKS/mFAS DH spans 1270–1581 (PELVSLAGPT…LKRIPIRSLQ (312 aa)). Residues 1277–1575 (GPTDGETVEF…EIIGASLKRI (299 aa)) are product template (PT) domain. Residues 1428 to 1581 (SASTVQGLFV…LKRIPIRSLQ (154 aa)) are C-terminal hotdog fold. 2 disordered regions span residues 1608–1631 (DSDS…HADF) and 1650–1672 (YPMD…VLSD). Residues 1650–1668 (YPMDSSSFSSAQPPSSASS) are compositionally biased toward low complexity. Residues 1671–1747 (SDHDQESTAL…DLYRMVLNHD (77 aa)) form the Carrier domain. Ser1707 carries the O-(pantetheine 4'-phosphoryl)serine modification. Residues 1751–1773 (DRGSTVLSDKAPKSKSDSSLHGQ) form a disordered region. The interval 1975 to 2155 (EFLHRVLSRL…DAGFIHVDWT (181 aa)) is methyltransferase (CMeT) domain.

It participates in secondary metabolite biosynthesis; terpenoid biosynthesis. Functionally, non-reducing polyketide synthase; part of the gene cluster that mediates the biosynthesis of diterpenoid pyrones. The first step of the pathway is the synthesis of the alpha-pyrone moiety by the polyketide synthase dpfgA via condensation of one acetyl-CoA starter unit with 3 malonyl-CoA units and 2 methylations. The alpha-pyrone is then combined with geranylgeranyl pyrophosphate (GGPP) formed by the GGPP synthase dpfgD through the action of the prenyltransferase dpfgC to yield a linear alpha-pyrone diterpenoid. Subsequent steps in the diterpenoid pyrone biosynthetic pathway involve the decalin core formation, which is initiated by the epoxidation of the C10-C11 olefin by the FAD-dependent oxidoreductase dpfgE, and is followed by a cyclization cascade catalyzed by the terpene cyclase dpfgB. The short chain dehydrogenase/reductase dpfgG then oxidizes the 8S hydroxy group to a ketone and the short chain dehydrogenase/reductase dpfgH reduces the ketone to the 8R hydroxy group to yield higginsianin B. Higginsianin B is further methylated by the methyltransferase dpfgI to produce the intermediate named FDDP B. The cytochrome P450 monooxygenase dfgpJ then catalyzes a three-step oxidation at C-27 to generate a carboxylic acid as well as C-26 hydroxylation. Finally, methyltransferase dpfgK methylates the carboxylic acid generated by dpfgJ, yielding the final diterpenoid pyrones from the pathway which were named FDDP D and FDDP E. The protein is Non-reducing polyketide synthase dpfgA of Gibberella zeae (strain ATCC MYA-4620 / CBS 123657 / FGSC 9075 / NRRL 31084 / PH-1) (Wheat head blight fungus).